A 657-amino-acid polypeptide reads, in one-letter code: Protein mono-ADP-ribosyltransferase TIPARP (657 aa).

Over residues 1-10 (MEMETTEPEP) the composition is skewed to acidic residues. The tract at residues 1-21 (MEMETTEPEPDCVVQPPSPPD) is disordered. Cys39 bears the ADP-ribosylcysteine mark. A Nuclear localization signal motif is present at residues 41–47 (KKKDQKR). The C3H1-type zinc finger occupies 237-264 (ENGIEICMDFLQGTCIYGRDCLKHHTVL). In terms of domain architecture, WWE spans 332–410 (STPPSSNVNS…RRPLFRSCFI (79 aa)). Residues 449-657 (YPETWVYMHP…YEEVSNTVSI (209 aa)) enclose the PARP catalytic domain.

This sequence belongs to the ARTD/PARP family. As to quaternary structure, interacts with AHR. Post-translationally, auto-mono-ADP-ribosylated.

It is found in the nucleus. It carries out the reaction L-aspartyl-[protein] + NAD(+) = 4-O-(ADP-D-ribosyl)-L-aspartyl-[protein] + nicotinamide. The enzyme catalyses L-glutamyl-[protein] + NAD(+) = 5-O-(ADP-D-ribosyl)-L-glutamyl-[protein] + nicotinamide. It catalyses the reaction L-cysteinyl-[protein] + NAD(+) = S-(ADP-D-ribosyl)-L-cysteinyl-[protein] + nicotinamide + H(+). Its activity is regulated as follows. ADP-ribosyltransferase activity is inhibited by PJ34; inhibition is however not specific to TIPARP and other PARP-domain containing proteins are also inhibited by PJ34. Partially inhibited by KU0058948. Its function is as follows. ADP-ribosyltransferase that mediates mono-ADP-ribosylation of glutamate, aspartate and cysteine residues on target proteins. Acts as a negative regulator of AHR by mediating mono-ADP-ribosylation of AHR, leading to inhibit transcription activator activity of AHR. The chain is Protein mono-ADP-ribosyltransferase TIPARP from Homo sapiens (Human).